The sequence spans 225 residues: Flagellar transcriptional regulator FlhC (225 aa).

Zn(2+)-binding residues include C149, C152, C169, and C172.

This sequence belongs to the FlhC family. In terms of assembly, heterohexamer composed of two FlhC and four FlhD subunits. Each FlhC binds a FlhD dimer, forming a heterotrimer, and a hexamer assembles by dimerization of two heterotrimers. It depends on Zn(2+) as a cofactor.

The protein resides in the cytoplasm. Functions in complex with FlhD as a master transcriptional regulator that regulates transcription of several flagellar and non-flagellar operons by binding to their promoter region. Activates expression of class 2 flagellar genes, including fliA, which is a flagellum-specific sigma factor that turns on the class 3 genes. Also regulates genes whose products function in a variety of physiological pathways. The polypeptide is Flagellar transcriptional regulator FlhC (Burkholderia lata (strain ATCC 17760 / DSM 23089 / LMG 22485 / NCIMB 9086 / R18194 / 383)).